The primary structure comprises 329 residues: D-threo-aldose 1-dehydrogenase (329 aa).

Y58 functions as the Proton donor in the catalytic mechanism. H145 lines the substrate pocket.

The protein belongs to the aldo/keto reductase family.

It carries out the reaction a D-threo-aldose + NAD(+) = a D-threo-aldono-1,5-lactone + NADH + H(+). With respect to regulation, inhibited strongly by Hg(2+), Cd(2+) and para-chloromercuribenzoic acid (PCMB) and weakly by Zn(2+) and iodoacetamide. Also inhibited strongly by L-xylose but not D-glucose. Its function is as follows. Catalyzes the oxidation of L-fucose to L-fuconolactone in the presence of NADP(+). Also active against L-galactose and, to a much lesser degree, D-arabinose. Uses NADP(+) as a hydrogen acceptor much more efficiently than NAD(+). The chain is D-threo-aldose 1-dehydrogenase from Pseudomonas sp.